The primary structure comprises 437 residues: Amino-acid acetyltransferase (437 aa).

The N-acetyltransferase domain occupies 289–437 (ECIRLATSFD…SKVLMLALDN (149 aa)).

Belongs to the acetyltransferase family. ArgA subfamily.

It localises to the cytoplasm. It catalyses the reaction L-glutamate + acetyl-CoA = N-acetyl-L-glutamate + CoA + H(+). It participates in amino-acid biosynthesis; L-arginine biosynthesis; N(2)-acetyl-L-ornithine from L-glutamate: step 1/4. The sequence is that of Amino-acid acetyltransferase from Haemophilus ducreyi (strain 35000HP / ATCC 700724).